The sequence spans 105 residues: Membrane-stabilizing protein A (105 aa).

A helical membrane pass occupies residues M1–F21. The Cytoplasmic segment spans residues K22–R29. A helical membrane pass occupies residues I30 to F50. Topologically, residues P51–W55 are extracellular. The helical transmembrane segment at W56–L76 threads the bilayer. Over K77–N84 the chain is Cytoplasmic. Residues I85 to F105 form a helical membrane-spanning segment.

It belongs to the MspA family.

Its subcellular location is the membrane. Its function is as follows. Plays a role in toxin production, resistance to host innate immune mechanisms, and iron homeostasis. This Staphylococcus aureus (strain NCTC 8325 / PS 47) protein is Membrane-stabilizing protein A.